The following is a 66-amino-acid chain: Alpha-like toxin Bom3 (66 aa).

The region spanning 2–66 (RDGYIAQPEN…PIVVGGEKCH (65 aa)) is the LCN-type CS-alpha/beta domain. 4 cysteine pairs are disulfide-bonded: C12/C65, C16/C37, C23/C47, and C27/C49.

The protein belongs to the long (4 C-C) scorpion toxin superfamily. Sodium channel inhibitor family. Alpha subfamily. In terms of tissue distribution, expressed by the venom gland.

Its subcellular location is the secreted. Alpha toxins bind voltage-independently at site-3 of sodium channels (Nav) and inhibit the inactivation of the activated channels, thereby blocking neuronal transmission. As it competes neither with the classical alpha-toxin AaH2 nor the beta-toxin Css2, this toxin is an alpha-like toxin. The chain is Alpha-like toxin Bom3 from Buthus occitanus mardochei (Moroccan scorpion).